Reading from the N-terminus, the 244-residue chain is Chalcone--flavanone isomerase (244 aa).

Residues threonine 57, asparagine 122, and serine 199 each contribute to the substrate site.

It belongs to the chalcone isomerase family.

It carries out the reaction a chalcone = a flavanone.. It functions in the pathway secondary metabolite biosynthesis; flavonoid biosynthesis. Catalyzes the intramolecular cyclization of bicyclic chalcones into tricyclic (S)-flavanones. Responsible for the isomerization of 4,2',4',6'-tetrahydroxychalcone (also termed chalcone) into naringenin. This Arabidopsis lyrata subsp. petraea (Northern rock-cress) protein is Chalcone--flavanone isomerase (CHI).